The chain runs to 434 residues: Probable phosphatidylinositol 3,4,5-trisphosphate 3-phosphatase TEP1 (434 aa).

One can recognise a Phosphatase tensin-type domain in the interval 33–255; that stretch reads KTKNDIGLRL…RYHEFFITHE (223 aa). Residue Cys-193 is the Phosphocysteine intermediate of the active site.

It carries out the reaction a 1,2-diacyl-sn-glycero-3-phospho-(1D-myo-inositol-3,4,5-trisphosphate) + H2O = a 1,2-diacyl-sn-glycero-3-phospho-(1D-myo-inositol-4,5-bisphosphate) + phosphate. In terms of biological role, may act as a phosphoinositide 3-phosphatase by regulating PtdIns(3,4,5)P3 levels. In Saccharomyces cerevisiae (strain ATCC 204508 / S288c) (Baker's yeast), this protein is Probable phosphatidylinositol 3,4,5-trisphosphate 3-phosphatase TEP1 (TEP1).